We begin with the raw amino-acid sequence, 556 residues long: General transcription factor IIF subunit 1 (556 aa).

2 disordered regions span residues 82 to 128 (TMTS…PAAA) and 226 to 499 (SRLQ…PFTE). Positions 84 to 128 (TSAPNGTNSTGTTPNTTTTTTTTTTTTTTTTTAAGTPGAPNPAAA) are enriched in low complexity. The span at 245–275 (SGKKSIEELEEAEHRNRNEDPNRYKTTNEEK) shows a compositional bias: basic and acidic residues. 2 stretches are compositionally biased toward acidic residues: residues 291-338 (GNGE…DVDL) and 378-394 (GDDE…DQDD). 2 stretches are compositionally biased toward basic and acidic residues: residues 415–427 (VKKE…DSKS) and 450–461 (NKSDSSVDNRES). The segment covering 469-492 (SSPQAVQPNSPSQQQQQQQQNIDP) has biased composition (low complexity).

It belongs to the TFIIF alpha subunit family. In terms of assembly, heterodimer of an alpha and a beta subunit.

Its subcellular location is the nucleus. Functionally, TFIIF is a general transcription initiation factor that binds to RNA polymerase II and helps to recruit it to the initiation complex in collaboration with TFIIB. It promotes transcription elongation. This Dictyostelium discoideum (Social amoeba) protein is General transcription factor IIF subunit 1 (gtf2f1).